The following is a 785-amino-acid chain: Formin-like protein 3 (785 aa).

The signal sequence occupies residues 1–20; that stretch reads MGRLRLAFLAISLVVFVCVS. Residues 96–145 form a disordered region; sequence YDWLAPASSPNEPPAETPDESSPSPSEETPSVVAPSQSVPGPPRPPPQRE. Over residues 115–134 the composition is skewed to low complexity; sequence ESSPSPSEETPSVVAPSQSV. The helical transmembrane segment at 154–174 threads the bilayer; the sequence is LIIAVASTAVLTFVFVALMFL. Disordered stretches follow at residues 184–228, 241–329, and 730–785; these read AVGS…KKRS, EFST…APKT, and ETTK…SSPS. Positions 201–223 are enriched in polar residues; sequence STGSTENSPTVASTSRKMFSVAS. Residues 256-303 are compositionally biased toward pro residues; the sequence is LKLPPGRSAPPPPPAAAPPPQPPPPPPPKPQPPPPPKIARPPPAPPKG. Residues 321–747 form the FH2 domain; it reads DSETGAPKTK…SGKKESEMTT (427 aa). Over residues 745-754 the composition is skewed to polar residues; the sequence is MTTSDSNQPS. A compositionally biased stretch (acidic residues) spans 773–785; the sequence is SDDSDDEEDSSPS.

This sequence belongs to the formin-like family. Class-I subfamily.

It is found in the membrane. Functionally, acts as actin nucleation factor that directs the formation of actin cables and polarized growth in pollen tubes. This is Formin-like protein 3 (FH3) from Arabidopsis thaliana (Mouse-ear cress).